The chain runs to 436 residues: 3-ketoacyl-CoA thiolase (436 aa).

The active-site Acyl-thioester intermediate is Cys-99. Catalysis depends on proton acceptor residues His-392 and Cys-422.

The protein belongs to the thiolase-like superfamily. Thiolase family. Heterotetramer of two alpha chains (FadJ) and two beta chains (FadI).

It is found in the cytoplasm. The catalysed reaction is an acyl-CoA + acetyl-CoA = a 3-oxoacyl-CoA + CoA. It participates in lipid metabolism; fatty acid beta-oxidation. In terms of biological role, catalyzes the final step of fatty acid oxidation in which acetyl-CoA is released and the CoA ester of a fatty acid two carbons shorter is formed. This chain is 3-ketoacyl-CoA thiolase, found in Shigella dysenteriae serotype 1 (strain Sd197).